Here is a 427-residue protein sequence, read N- to C-terminus: Light-independent protochlorophyllide reductase subunit N (427 aa).

Positions 29, 54, and 115 each coordinate [4Fe-4S] cluster.

The protein belongs to the BchN/ChlN family. Protochlorophyllide reductase is composed of three subunits; BchL, BchN and BchB. Forms a heterotetramer of two BchB and two BchN subunits. The cofactor is [4Fe-4S] cluster.

The enzyme catalyses chlorophyllide a + oxidized 2[4Fe-4S]-[ferredoxin] + 2 ADP + 2 phosphate = protochlorophyllide a + reduced 2[4Fe-4S]-[ferredoxin] + 2 ATP + 2 H2O. It functions in the pathway porphyrin-containing compound metabolism; bacteriochlorophyll biosynthesis (light-independent). In terms of biological role, component of the dark-operative protochlorophyllide reductase (DPOR) that uses Mg-ATP and reduced ferredoxin to reduce ring D of protochlorophyllide (Pchlide) to form chlorophyllide a (Chlide). This reaction is light-independent. The NB-protein (BchN-BchB) is the catalytic component of the complex. In Bradyrhizobium sp. (strain ORS 278), this protein is Light-independent protochlorophyllide reductase subunit N.